A 137-amino-acid chain; its full sequence is Ribosome-binding factor A (137 aa).

The protein belongs to the RbfA family. In terms of assembly, monomer. Binds 30S ribosomal subunits, but not 50S ribosomal subunits or 70S ribosomes.

It localises to the cytoplasm. Its function is as follows. One of several proteins that assist in the late maturation steps of the functional core of the 30S ribosomal subunit. Associates with free 30S ribosomal subunits (but not with 30S subunits that are part of 70S ribosomes or polysomes). Required for efficient processing of 16S rRNA. May interact with the 5'-terminal helix region of 16S rRNA. The polypeptide is Ribosome-binding factor A (Erwinia tasmaniensis (strain DSM 17950 / CFBP 7177 / CIP 109463 / NCPPB 4357 / Et1/99)).